The sequence spans 101 residues: Small ribosomal subunit protein uS14 (101 aa).

Belongs to the universal ribosomal protein uS14 family. As to quaternary structure, part of the 30S ribosomal subunit. Contacts proteins S3 and S10.

Its function is as follows. Binds 16S rRNA, required for the assembly of 30S particles and may also be responsible for determining the conformation of the 16S rRNA at the A site. The polypeptide is Small ribosomal subunit protein uS14 (Ruegeria pomeroyi (strain ATCC 700808 / DSM 15171 / DSS-3) (Silicibacter pomeroyi)).